A 138-amino-acid chain; its full sequence is ATP synthase epsilon chain (138 aa).

This sequence belongs to the ATPase epsilon chain family. F-type ATPases have 2 components, CF(1) - the catalytic core - and CF(0) - the membrane proton channel. CF(1) has five subunits: alpha(3), beta(3), gamma(1), delta(1), epsilon(1). CF(0) has three main subunits: a, b and c.

It is found in the cell membrane. Its function is as follows. Produces ATP from ADP in the presence of a proton gradient across the membrane. The protein is ATP synthase epsilon chain of Polynucleobacter asymbioticus (strain DSM 18221 / CIP 109841 / QLW-P1DMWA-1) (Polynucleobacter necessarius subsp. asymbioticus).